The following is a 156-amino-acid chain: Lipoprotein signal peptidase (156 aa).

The next 3 helical transmembrane spans lie at 37–57 (VIPGFFNLVHVVNKGAAFGFL), 68–88 (FFVVVTIIALGAIGMLLKSAE), and 95–115 (ILGLGFVLGGAIGNLIDRILY). Active-site residues include aspartate 120 and aspartate 138. A helical membrane pass occupies residues 133–153 (AFNVADIAICLGAFAMIVSFY).

Belongs to the peptidase A8 family.

Its subcellular location is the cell inner membrane. It carries out the reaction Release of signal peptides from bacterial membrane prolipoproteins. Hydrolyzes -Xaa-Yaa-Zaa-|-(S,diacylglyceryl)Cys-, in which Xaa is hydrophobic (preferably Leu), and Yaa (Ala or Ser) and Zaa (Gly or Ala) have small, neutral side chains.. It functions in the pathway protein modification; lipoprotein biosynthesis (signal peptide cleavage). Its function is as follows. This protein specifically catalyzes the removal of signal peptides from prolipoproteins. The protein is Lipoprotein signal peptidase of Maridesulfovibrio salexigens (strain ATCC 14822 / DSM 2638 / NCIMB 8403 / VKM B-1763) (Desulfovibrio salexigens).